The sequence spans 479 residues: Long-chain alcohol oxidase (479 aa).

The FAD-binding PCMH-type domain maps to 14-183; that stretch reads QILRPSAAYT…LAVRIRCREQ (170 aa). At H49 the chain carries Pros-8alpha-FAD histidine. FAD is bound by residues T113, G116, 120-123, and I173; that span reads TGTH. A helical transmembrane segment spans residues 241 to 258; the sequence is LYWLGTMDYGLILQILFL. FAD is bound by residues R369 and H425.

The protein belongs to the oxygen-dependent FAD-linked oxidoreductase family. The cofactor is FAD.

It localises to the cell membrane. It carries out the reaction a long-chain primary fatty alcohol + O2 = a long-chain fatty aldehyde + H2O2. The enzyme catalyses dodecan-1-ol + O2 = dodecanal + H2O2. The catalysed reaction is tetradecan-1-ol + O2 = tetradecanal + H2O2. It catalyses the reaction octan-1-ol + O2 = octanal + H2O2. It carries out the reaction decan-1-ol + O2 = decanal + H2O2. It participates in lipid metabolism; fatty acid metabolism. Functionally, in vitro catalyzes the oxidation of a range of fatty alcohols having a carbon chain length of six and above, with a reduction of O2 to H2O2. Shows the highest activity with 1-dodecanol. Is likely involved in lipid metabolism. The polypeptide is Long-chain alcohol oxidase (Uncultured marine euryarchaeote).